The sequence spans 417 residues: Indole-3-pyruvate monooxygenase YUCCA6 (417 aa).

Position 36-41 (36-41 (GAGPSG)) interacts with FAD. Residue 204–209 (GCGNSG) coordinates NADP(+).

The protein belongs to the FMO family. It depends on FAD as a cofactor. As to expression, highly expressed in roots but modestly expressed in the cauline leaves and flowers. Expressed in anthers.

The protein localises to the cytoplasm. It carries out the reaction indole-3-pyruvate + NADPH + O2 + H(+) = (indol-3-yl)acetate + CO2 + NADP(+) + H2O. It participates in plant hormone metabolism; auxin biosynthesis. In terms of biological role, involved in auxin biosynthesis via the indole-3-pyruvic acid (IPA) pathway. Also able to convert in vitro phenyl pyruvate (PPA) to phenyl acetic acid (PAA). Required for the formation of floral organs and vascular tissues. Belongs to the set of redundant YUCCA genes probably responsible for auxin biosynthesis in shoots. The protein is Indole-3-pyruvate monooxygenase YUCCA6 (YUC6) of Arabidopsis thaliana (Mouse-ear cress).